We begin with the raw amino-acid sequence, 93 residues long: Islet amyloid polypeptide (93 aa).

A signal peptide spans 1–23; the sequence is MMCISKLPAVLLILSVALNHLRA. Positions 24-35 are excised as a propeptide; it reads TPVRSGSNPQMD. Residues cysteine 39 and cysteine 44 are joined by a disulfide bond. Positions 64–93 are disordered; that stretch reads LPPTNVGSNTYGKRNAAGDPNRESLDFLLV. Tyrosine 74 is modified (tyrosine amide). Residues 78-93 constitute a propeptide that is removed on maturation; it reads NAAGDPNRESLDFLLV. The segment covering 83-93 has biased composition (basic and acidic residues); sequence PNRESLDFLLV.

The protein belongs to the calcitonin family. In terms of assembly, can form homodimers. Interacts with IDE and INS. Interaction with INS inhibits homodimerization and fibril formation.

The protein localises to the secreted. Functionally, amylin/IAPP is a glucoregulatory peptide hormone that plays an important role in the regulation of energy homeostasis. Selectively inhibits insulin-stimulated glucose utilization and glycogen deposition in muscle, while not affecting adipocyte glucose metabolism. IAPP function is mediated by the CALCR-RAMPs (AMYRs) receptor complexes. Amylin can also bind CALCR receptor in the absence of RAMPs, although it is more selective for AMYRs. The polypeptide is Islet amyloid polypeptide (Mus musculus (Mouse)).